We begin with the raw amino-acid sequence, 810 residues long: Lon protease (810 aa).

Residues 40 to 233 form the Lon N-terminal domain; it reads LIIVPVRGFV…MVAKLLAQRI (194 aa). Residue 385–392 coordinates ATP; it reads GPPGVGKT. The 182-residue stretch at 621–802 folds into the Lon proteolytic domain; the sequence is LSVPGVATGL…DDAMAAAFEG (182 aa). Active-site residues include Ser708 and Lys751.

Belongs to the peptidase S16 family. As to quaternary structure, homohexamer. Organized in a ring with a central cavity.

Its subcellular location is the cytoplasm. It carries out the reaction Hydrolysis of proteins in presence of ATP.. Functionally, ATP-dependent serine protease that mediates the selective degradation of mutant and abnormal proteins as well as certain short-lived regulatory proteins. Required for cellular homeostasis and for survival from DNA damage and developmental changes induced by stress. Degrades polypeptides processively to yield small peptide fragments that are 5 to 10 amino acids long. Binds to DNA in a double-stranded, site-specific manner. The polypeptide is Lon protease (Methylocella silvestris (strain DSM 15510 / CIP 108128 / LMG 27833 / NCIMB 13906 / BL2)).